Consider the following 734-residue polypeptide: Transcription factor EMB1444 (734 aa).

The interval 537 to 566 is disordered; the sequence is QFPTSLEIPKKNKKRAKPGESSRPRPRDRQ. Positions 548 to 555 match the Nuclear localization signal motif; sequence NKKRAKPG. The bHLH domain occupies 552 to 601; that stretch reads AKPGESSRPRPRDRQLIQDRIKELRELVPNGSKCSIDSLLECTIKHMLFL. The span at 553 to 566 shows a compositional bias: basic and acidic residues; the sequence is KPGESSRPRPRDRQ.

This sequence belongs to the bHLH protein family. LHW subfamily. As to quaternary structure, homodimer.

The protein resides in the nucleus. Transcription factor that may regulate root development. The chain is Transcription factor EMB1444 from Arabidopsis thaliana (Mouse-ear cress).